We begin with the raw amino-acid sequence, 553 residues long: Dihydroxy-acid dehydratase (553 aa).

Residue Asp-78 participates in Mg(2+) binding. Cys-119 contributes to the [2Fe-2S] cluster binding site. Residues Asp-120 and Lys-121 each coordinate Mg(2+). Position 121 is an N6-carboxylysine (Lys-121). Cys-191 lines the [2Fe-2S] cluster pocket. Glu-444 contributes to the Mg(2+) binding site. The active-site Proton acceptor is Ser-470.

The protein belongs to the IlvD/Edd family. As to quaternary structure, homodimer. It depends on [2Fe-2S] cluster as a cofactor. Mg(2+) serves as cofactor.

It carries out the reaction (2R)-2,3-dihydroxy-3-methylbutanoate = 3-methyl-2-oxobutanoate + H2O. It catalyses the reaction (2R,3R)-2,3-dihydroxy-3-methylpentanoate = (S)-3-methyl-2-oxopentanoate + H2O. It participates in amino-acid biosynthesis; L-isoleucine biosynthesis; L-isoleucine from 2-oxobutanoate: step 3/4. It functions in the pathway amino-acid biosynthesis; L-valine biosynthesis; L-valine from pyruvate: step 3/4. Its function is as follows. Functions in the biosynthesis of branched-chain amino acids. Catalyzes the dehydration of (2R,3R)-2,3-dihydroxy-3-methylpentanoate (2,3-dihydroxy-3-methylvalerate) into 2-oxo-3-methylpentanoate (2-oxo-3-methylvalerate) and of (2R)-2,3-dihydroxy-3-methylbutanoate (2,3-dihydroxyisovalerate) into 2-oxo-3-methylbutanoate (2-oxoisovalerate), the penultimate precursor to L-isoleucine and L-valine, respectively. This is Dihydroxy-acid dehydratase from Methanosarcina barkeri (strain Fusaro / DSM 804).